We begin with the raw amino-acid sequence, 683 residues long: Capsid polyprotein VP90 (683 aa).

Low complexity predominate over residues 1–13 (MAGGATAPAGAKP). Disordered regions lie at residues 1-45 (MAGG…KQEL) and 391-413 (PNAESNNLPPPTTGAQPQPQPPA). Basic residues predominate over residues 14–39 (KQPKQKQKKPSSQARKKPSQKQKAMK). Over residues 398–413 (LPPPTTGAQPQPQPPA) the composition is skewed to pro residues.

It belongs to the astroviridae capsid polyprotein family. Specific enzymatic cleavages by the host yield mature proteins.

It localises to the virion. In terms of biological role, self-assembles to form an icosahedral T=3 immature capsid. The chain is Capsid polyprotein VP90 from Gallus gallus (Chicken).